Consider the following 601-residue polypeptide: Pyranose 2-oxidase (601 aa).

His151 bears the Tele-8alpha-FAD histidine mark. Positions 406 and 408 each coordinate substrate. The active-site Proton acceptor is His505. Residue Asn558 is part of the active site. The interval 577–601 (KLGKKGSHSGNRDDGDVDTDTDDDA) is disordered. The segment covering 591–601 (GDVDTDTDDDA) has biased composition (acidic residues).

This sequence belongs to the GMC oxidoreductase family. As to quaternary structure, homotetramer. Requires FAD as cofactor.

It catalyses the reaction D-glucose + O2 = 2-dehydro-D-glucose + H2O2. Its function is as follows. Catalyzes the oxidation of various aldopyranoses and disaccharides on carbon-2 to the corresponding 2-keto sugars concomitant with the reduction of O(2) to H(2)O(2). This is Pyranose 2-oxidase (p2ox) from Emericella nidulans (strain FGSC A4 / ATCC 38163 / CBS 112.46 / NRRL 194 / M139) (Aspergillus nidulans).